The following is a 364-amino-acid chain: F-box protein At1g59680 (364 aa).

The F-box domain occupies 2–49; the sequence is TTMSDLSVDLVGEILSRVPLTSLSAVRCTCKSWNTLSKHQIFGKAELA.

The chain is F-box protein At1g59680 from Arabidopsis thaliana (Mouse-ear cress).